The chain runs to 122 residues: ATP synthase epsilon chain (122 aa).

The segment covering 97-112 (EDLKSERELTRSRGDA) has biased composition (basic and acidic residues). The segment at 97–122 (EDLKSERELTRSRGDAALRATRRLNS) is disordered.

Belongs to the ATPase epsilon chain family. In terms of assembly, F-type ATPases have 2 components, CF(1) - the catalytic core - and CF(0) - the membrane proton channel. CF(1) has five subunits: alpha(3), beta(3), gamma(1), delta(1), epsilon(1). CF(0) has three main subunits: a, b and c.

It localises to the cell membrane. Its function is as follows. Produces ATP from ADP in the presence of a proton gradient across the membrane. The chain is ATP synthase epsilon chain from Corynebacterium aurimucosum (strain ATCC 700975 / DSM 44827 / CIP 107346 / CN-1) (Corynebacterium nigricans).